Reading from the N-terminus, the 329-residue chain is Beta-ketoacyl-[acyl-carrier-protein] synthase III (329 aa).

Catalysis depends on residues Cys-123 and His-256. The segment at 257 to 261 (QANIR) is ACP-binding. Asn-286 is an active-site residue.

The protein belongs to the thiolase-like superfamily. FabH family. Homodimer.

The protein localises to the cytoplasm. The catalysed reaction is malonyl-[ACP] + acetyl-CoA + H(+) = 3-oxobutanoyl-[ACP] + CO2 + CoA. Its pathway is lipid metabolism; fatty acid biosynthesis. Catalyzes the condensation reaction of fatty acid synthesis by the addition to an acyl acceptor of two carbons from malonyl-ACP. Catalyzes the first condensation reaction which initiates fatty acid synthesis and may therefore play a role in governing the total rate of fatty acid production. Possesses both acetoacetyl-ACP synthase and acetyl transacylase activities. Its substrate specificity determines the biosynthesis of branched-chain and/or straight-chain of fatty acids. This Burkholderia cenocepacia (strain HI2424) protein is Beta-ketoacyl-[acyl-carrier-protein] synthase III.